Here is a 474-residue protein sequence, read N- to C-terminus: Cysteine--tRNA ligase (474 aa).

Residue Cys28 participates in Zn(2+) binding. Residues 30–40 (ITVYDLCHLGH) carry the 'HIGH' region motif. Zn(2+) contacts are provided by Cys209, His234, and Glu238. The 'KMSKS' region signature appears at 269–273 (KMSKS). Lys272 is an ATP binding site.

The protein belongs to the class-I aminoacyl-tRNA synthetase family. Monomer. Zn(2+) is required as a cofactor.

The protein localises to the cytoplasm. The catalysed reaction is tRNA(Cys) + L-cysteine + ATP = L-cysteinyl-tRNA(Cys) + AMP + diphosphate. This is Cysteine--tRNA ligase from Blochmanniella floridana.